The chain runs to 440 residues: 2-methylisoborneol synthase (440 aa).

2 disordered regions span residues 1–33 and 46–74; these read MPDS…IPSA and LHPP…TVTG. Pro residues-rich tracts occupy residues 9–29 and 50–63; these read TPPP…PAPV and VTVP…PPAP. 6 residues coordinate Mg(2+): Asp-197, Asp-198, Glu-202, Asn-345, Ser-349, and Glu-353.

It belongs to the terpene synthase family. 2-methylisoborneol synthase subfamily. Mg(2+) serves as cofactor.

The catalysed reaction is (E)-2-methylgeranyl diphosphate + H2O = 2-methylisoborneol + diphosphate. Catalyzes the cyclization of 2-methylgeranyl diphosphate (2-MeGPP) to 2-methylisoborneol (2-MIB), which likely involves the intermediacy of 2-methyllinalyl diphosphate. Is also able to catalyze the cyclization of geranyl diphosphate (GPP), albeit with much lower efficiency, leading to the formation of a complex mixture of cyclic monoterpenes, consisting of alpha-pinene (6%), beta-pinene (23%), limonene (32%), gamma-terpinene (29%), and delta-terpinene (10%). This is 2-methylisoborneol synthase from Streptomyces coelicolor (strain ATCC BAA-471 / A3(2) / M145).